A 134-amino-acid polypeptide reads, in one-letter code: Aspartate 1-decarboxylase (134 aa).

Ser-25 functions as the Schiff-base intermediate with substrate; via pyruvic acid in the catalytic mechanism. The residue at position 25 (Ser-25) is a Pyruvic acid (Ser). Thr-57 is a binding site for substrate. Tyr-58 acts as the Proton donor in catalysis. A substrate-binding site is contributed by 73–75 (GAA).

Belongs to the PanD family. Heterooctamer of four alpha and four beta subunits. It depends on pyruvate as a cofactor. In terms of processing, is synthesized initially as an inactive proenzyme, which is activated by self-cleavage at a specific serine bond to produce a beta-subunit with a hydroxyl group at its C-terminus and an alpha-subunit with a pyruvoyl group at its N-terminus.

The protein localises to the cytoplasm. The catalysed reaction is L-aspartate + H(+) = beta-alanine + CO2. It participates in cofactor biosynthesis; (R)-pantothenate biosynthesis; beta-alanine from L-aspartate: step 1/1. In terms of biological role, catalyzes the pyruvoyl-dependent decarboxylation of aspartate to produce beta-alanine. The protein is Aspartate 1-decarboxylase of Geobacter sp. (strain M21).